The chain runs to 114 residues: uncharacterized protein (114 aa).

Residues 1–24 (MFGACYKQPLKPSGSEPPAEECRM) form a disordered region.

In terms of tissue distribution, expressed in kidney and liver.

This is an uncharacterized protein from Homo sapiens (Human).